Reading from the N-terminus, the 124-residue chain is Desulfoferrodoxin homolog (124 aa).

Fe cation-binding residues include Cys10, Cys13, Cys29, Cys30, His49, His69, His75, Cys117, and His120.

It belongs to the desulfoferrodoxin family. It depends on Fe(3+) as a cofactor. Cu(2+) serves as cofactor.

The protein is Desulfoferrodoxin homolog of Methanothermobacter thermautotrophicus (strain ATCC 29096 / DSM 1053 / JCM 10044 / NBRC 100330 / Delta H) (Methanobacterium thermoautotrophicum).